The chain runs to 154 residues: Anaerobic ribonucleoside-triphosphate reductase-activating protein (154 aa).

Positions 26, 30, and 33 each coordinate [4Fe-4S] cluster. S-adenosyl-L-methionine contacts are provided by residues 32–34 (GCY) and G74.

It belongs to the organic radical-activating enzymes family. Forms a tetramer composed of two NrdD and two NrdG subunits. [4Fe-4S] cluster is required as a cofactor.

The protein localises to the cytoplasm. The enzyme catalyses glycyl-[protein] + reduced [flavodoxin] + S-adenosyl-L-methionine = glycin-2-yl radical-[protein] + semiquinone [flavodoxin] + 5'-deoxyadenosine + L-methionine + H(+). Functionally, activation of anaerobic ribonucleoside-triphosphate reductase under anaerobic conditions by generation of an organic free radical, using S-adenosylmethionine and reduced flavodoxin as cosubstrates to produce 5'-deoxy-adenosine. This is Anaerobic ribonucleoside-triphosphate reductase-activating protein (nrdG) from Salmonella typhi.